The sequence spans 306 residues: Protease HtpX homolog (306 aa).

A run of 2 helical transmembrane segments spans residues threonine 10–glycine 30 and glutamine 33–serine 53. Histidine 135 contributes to the Zn(2+) binding site. Glutamate 136 is a catalytic residue. Histidine 139 provides a ligand contact to Zn(2+). 2 helical membrane-spanning segments follow: residues alanine 149–glycine 169 and glycine 181–isoleucine 201. Glutamate 210 contacts Zn(2+).

It belongs to the peptidase M48B family. Requires Zn(2+) as cofactor.

The protein resides in the cell membrane. This chain is Protease HtpX homolog, found in Bifidobacterium longum (strain NCC 2705).